The primary structure comprises 290 residues: Nitrogenase iron protein 1 (290 aa).

An ATP-binding site is contributed by 10 to 17 (GKGGIGKS). Cys-98 is a [4Fe-4S] cluster binding site. Residue Arg-101 is modified to ADP-ribosylarginine; by dinitrogenase reductase ADP-ribosyltransferase. Cys-133 is a [4Fe-4S] cluster binding site.

This sequence belongs to the NifH/BchL/ChlL family. As to quaternary structure, homodimer. [4Fe-4S] cluster is required as a cofactor. Post-translationally, the reversible ADP-ribosylation of Arg-101 inactivates the nitrogenase reductase and regulates nitrogenase activity.

The enzyme catalyses N2 + 8 reduced [2Fe-2S]-[ferredoxin] + 16 ATP + 16 H2O = H2 + 8 oxidized [2Fe-2S]-[ferredoxin] + 2 NH4(+) + 16 ADP + 16 phosphate + 6 H(+). With respect to regulation, nitrogenase holoenzyme is subject to 'conformational protection' by FeSII; under oxidizing conditions FeSII binds to the holoenzyme and reversibly protects it from oxidation. Functionally, the key enzymatic reactions in nitrogen fixation are catalyzed by the nitrogenase complex, which has 2 components: the iron protein (component 2) and a component 1 which is either a molybdenum-iron protein, a vanadium-iron, or an iron-iron protein. The chain is Nitrogenase iron protein 1 (nifH1) from Azotobacter vinelandii.